The primary structure comprises 224 residues: Probable C-&gt;U-editing enzyme APOBEC-2 (224 aa).

Positions 1–25 (MAQKEEAAAAAEPASQNGEEVENLE) are disordered. Glutamate 60 and histidine 98 together coordinate Zn(2+). The CMP/dCMP-type deaminase domain maps to 64-169 (GRNKTFLCYV…PEIQAALRKL (106 aa)). The active-site Proton donor is the glutamate 100. The Zn(2+) site is built by cysteine 128 and cysteine 131.

This sequence belongs to the cytidine and deoxycytidylate deaminase family. Homotetramer. Requires Zn(2+) as cofactor.

It catalyses the reaction cytidine(6666) in apoB mRNA + H2O + H(+) = uridine(6666) in apoB mRNA + NH4(+). In terms of biological role, probable C to U editing enzyme whose physiological substrate is not yet known. Does not display detectable apoB mRNA editing. Has a low intrinsic cytidine deaminase activity. May play a role in the epigenetic regulation of gene expression through the process of active DNA demethylation. This chain is Probable C-&gt;U-editing enzyme APOBEC-2 (APOBEC2), found in Bos taurus (Bovine).